Reading from the N-terminus, the 265-residue chain is Sarcotoxin II-1 (265 aa).

The N-terminal stretch at 1–22 (MKSFVLFAACMAIIALGSLAHA) is a signal peptide. A propeptide spans 23-24 (YP) (removed by a dipeptidylpeptidase). Glutamine 25 is modified (pyrrolidone carboxylic acid). The residue at position 264 (glycine 264) is a Glycine amide.

The protein belongs to the attacin/sarcotoxin-2 family. As to expression, synthesized by the fat body and is eventually secreted into the hemolymph.

Its subcellular location is the secreted. In terms of biological role, sarcotoxin II is an antibacterial protein which plays a role in the inflammatory response of this insect. The main effect of sarcotoxin II on E.coli may be the inhibition of cell wall synthesis, including septum formation. The chain is Sarcotoxin II-1 from Sarcophaga peregrina (Flesh fly).